The following is a 408-amino-acid chain: Putative gustatory receptor 58b (408 aa).

Topologically, residues 1-44 (MLHPKLGRVMNVVYYHSVVFALMSTTLRIRSCRKCLRLEKVSRT) are cytoplasmic. The helical transmembrane segment at 45–65 (YTIYSFFVGIFLFLNLYFMVP) threads the bilayer. The Extracellular portion of the chain corresponds to 66-82 (RIMEDGYMKYNIVLQWN). Residues 83–103 (FFVMLFLRAIAVVSCYGTLWL) traverse the membrane as a helical segment. Over 104–150 (KRHKIIQLYKYSLIYWKRFGHITRAIVDKKELLDLQESLARIMIRKI) the chain is Cytoplasmic. The helical transmembrane segment at 151–171 (ILLYSAFLCSTVLQYQLLSVI) threads the bilayer. The Extracellular segment spans residues 172–193 (NPQIFLAFCARLTHFLHFLCVK). A helical transmembrane segment spans residues 194 to 214 (MGFFGVLVLLNHQFLVIHLAI). At 215 to 245 (NALHGRKARKKWKALRSVAAMHLKTLRLARR) the chain is on the cytoplasmic side. A helical membrane pass occupies residues 246 to 266 (IFDMFDIANATVFINMFMTAI). The Extracellular segment spans residues 267–284 (NILYHAVQYSNSSIKSNG). Asn-277 is a glycosylation site (N-linked (GlcNAc...) asparagine). The chain crosses the membrane as a helical span at residues 285 to 305 (WGILFGNGLIVFNFWGTMALM). Topologically, residues 306–364 (EMLDSVVTSCNNTGQQLRQLSDLPKVGPKMQRELDVFTMQLRQNRLVYKICGIVELDKP) are cytoplasmic. The helical transmembrane segment at 365–385 (ACLSYIGSILSNVIILMQFDL) threads the bilayer. Topologically, residues 386–408 (RRQRQPINDRQYLIHLMKNKTKV) are extracellular. An N-linked (GlcNAc...) asparagine glycan is attached at Asn-404.

Belongs to the insect chemoreceptor superfamily. Gustatory receptor (GR) family. Gr22e subfamily. In terms of tissue distribution, expressed in the adult labellar chemosensory neurons, labral sense organ and thorax. In larvae, is in neurons of the terminal external chemosensory organ as well as in the dorsal pharyngeal sense organ.

The protein localises to the cell membrane. Probable gustatory receptor which mediates acceptance or avoidance behavior, depending on its substrates. In Drosophila melanogaster (Fruit fly), this protein is Putative gustatory receptor 58b (Gr58b).